A 280-amino-acid chain; its full sequence is MNENNIQKLQKIIEHYFIKQQNISKNNIDLNLRNTVQEVIDNLNNGILRVSEKINNKWITHQWIKKAIILFFTITNNKLMTWGNARFFDKCPTKFENKSEEYFKNRKIRIIPPATVRYGAYIANNTVIMPSYVNIGAYIDTGTMIDTWATIGSCAHIGKNTHISGGVGIGGVLEPIQANPTIIEDNCFIGARSEIAEGVIIEENSVLAMGVFISQSTKIYNRSTGHVHYGYVPSGSVVIPGSLPSEDGKSSTYCAIIVKTVDSRTKNKIQINNLLREYCN.

Substrate is bound by residues Arg-109 and Asp-146.

The protein belongs to the transferase hexapeptide repeat family. In terms of assembly, homotrimer.

It localises to the cytoplasm. The enzyme catalyses (S)-2,3,4,5-tetrahydrodipicolinate + succinyl-CoA + H2O = (S)-2-succinylamino-6-oxoheptanedioate + CoA. The protein operates within amino-acid biosynthesis; L-lysine biosynthesis via DAP pathway; LL-2,6-diaminopimelate from (S)-tetrahydrodipicolinate (succinylase route): step 1/3. This chain is 2,3,4,5-tetrahydropyridine-2,6-dicarboxylate N-succinyltransferase, found in Blochmanniella floridana.